A 224-amino-acid chain; its full sequence is 7-cyano-7-deazaguanine synthase (224 aa).

7–17 (LSGGLDSSTIL) provides a ligand contact to ATP. Zn(2+)-binding residues include cysteine 191, cysteine 199, cysteine 202, and cysteine 205.

The protein belongs to the QueC family. Zn(2+) is required as a cofactor.

The enzyme catalyses 7-carboxy-7-deazaguanine + NH4(+) + ATP = 7-cyano-7-deazaguanine + ADP + phosphate + H2O + H(+). It participates in purine metabolism; 7-cyano-7-deazaguanine biosynthesis. Its function is as follows. Catalyzes the ATP-dependent conversion of 7-carboxy-7-deazaguanine (CDG) to 7-cyano-7-deazaguanine (preQ(0)). This is 7-cyano-7-deazaguanine synthase from Nostoc punctiforme (strain ATCC 29133 / PCC 73102).